A 209-amino-acid chain; its full sequence is Small ribosomal subunit protein uS4 (209 aa).

Residues 98–164 (SRLDNVVYRG…TPFIVARETA (67 aa)) form the S4 RNA-binding domain.

Belongs to the universal ribosomal protein uS4 family. As to quaternary structure, part of the 30S ribosomal subunit. Contacts protein S5. The interaction surface between S4 and S5 is involved in control of translational fidelity.

Its function is as follows. One of the primary rRNA binding proteins, it binds directly to 16S rRNA where it nucleates assembly of the body of the 30S subunit. With S5 and S12 plays an important role in translational accuracy. This is Small ribosomal subunit protein uS4 from Frankia casuarinae (strain DSM 45818 / CECT 9043 / HFP020203 / CcI3).